The following is a 305-amino-acid chain: Protoheme IX farnesyltransferase 2 (305 aa).

The next 8 helical transmembrane spans lie at 38 to 58 (LITT…SFLG), 60 to 80 (INTV…SCAI), 115 to 135 (ILLV…AAVI), 157 to 177 (INTV…WTAV), 181 to 201 (IGVV…PHFL), 227 to 247 (VTKR…FFLG), 249 to 269 (LGLP…ILGL), and 285 to 305 (FVYS…LTLF).

Belongs to the UbiA prenyltransferase family. Protoheme IX farnesyltransferase subfamily. Interacts with CtaA.

The protein localises to the cell membrane. It catalyses the reaction heme b + (2E,6E)-farnesyl diphosphate + H2O = Fe(II)-heme o + diphosphate. The protein operates within porphyrin-containing compound metabolism; heme O biosynthesis; heme O from protoheme: step 1/1. Functionally, converts heme B (protoheme IX) to heme O by substitution of the vinyl group on carbon 2 of heme B porphyrin ring with a hydroxyethyl farnesyl side group. The polypeptide is Protoheme IX farnesyltransferase 2 (ctaB2) (Bacillus subtilis (strain 168)).